A 40-amino-acid chain; its full sequence is Photosystem II reaction center protein J (40 aa).

The chain crosses the membrane as a helical span at residues 8–28 (IPLWIIGTVTGIPVIGLIGIF).

It belongs to the PsbJ family. As to quaternary structure, PSII is composed of 1 copy each of membrane proteins PsbA, PsbB, PsbC, PsbD, PsbE, PsbF, PsbH, PsbI, PsbJ, PsbK, PsbL, PsbM, PsbT, PsbX, PsbY, PsbZ, Psb30/Ycf12, at least 3 peripheral proteins of the oxygen-evolving complex and a large number of cofactors. It forms dimeric complexes.

The protein localises to the plastid. It is found in the chloroplast thylakoid membrane. In terms of biological role, one of the components of the core complex of photosystem II (PSII). PSII is a light-driven water:plastoquinone oxidoreductase that uses light energy to abstract electrons from H(2)O, generating O(2) and a proton gradient subsequently used for ATP formation. It consists of a core antenna complex that captures photons, and an electron transfer chain that converts photonic excitation into a charge separation. The sequence is that of Photosystem II reaction center protein J from Citrus sinensis (Sweet orange).